Reading from the N-terminus, the 110-residue chain is MEVLAKHRFARTSPQKARLVADQIRGLPVAKALEILTFSPKKAAVLVKKVVDSAIANAEHNEGADIDDLKIAKVFVDEGPTMKRIMPRAKGRADRIIKRTSHITVVVSDR.

Belongs to the universal ribosomal protein uL22 family. As to quaternary structure, part of the 50S ribosomal subunit.

In terms of biological role, this protein binds specifically to 23S rRNA; its binding is stimulated by other ribosomal proteins, e.g. L4, L17, and L20. It is important during the early stages of 50S assembly. It makes multiple contacts with different domains of the 23S rRNA in the assembled 50S subunit and ribosome. Functionally, the globular domain of the protein is located near the polypeptide exit tunnel on the outside of the subunit, while an extended beta-hairpin is found that lines the wall of the exit tunnel in the center of the 70S ribosome. This Shewanella amazonensis (strain ATCC BAA-1098 / SB2B) protein is Large ribosomal subunit protein uL22.